The sequence spans 458 residues: Cysteine--tRNA ligase (458 aa).

Cys-29 provides a ligand contact to Zn(2+). The 'HIGH' region motif lies at 31-41 (PTVYDNPHIGN). Residues Cys-214, His-239, and Glu-243 each coordinate Zn(2+). The 'KMSKS' region motif lies at 272–276 (KMSKS). Residue Lys-275 coordinates ATP.

It belongs to the class-I aminoacyl-tRNA synthetase family. In terms of assembly, monomer. The cofactor is Zn(2+).

It localises to the cytoplasm. The catalysed reaction is tRNA(Cys) + L-cysteine + ATP = L-cysteinyl-tRNA(Cys) + AMP + diphosphate. In Rickettsia bellii (strain OSU 85-389), this protein is Cysteine--tRNA ligase.